Consider the following 255-residue polypeptide: MGIKIIIAGFKGKMGQAAYKMVTEDPELELVGLLDPFTDEKEVAGVPVFNAKEELAGLEAHVWVDFTTPKVAYDNTRFALEQGFCPVVGTTGFTPEQLEELITLSREKQLGGLIAPNFALGAVLLMQFAAQAAKYFPNVEIIELHHDQKKDAPSGTAIKTAELISQVRPSKQQGAADEEESIAGARGAYFDGMRIHSVRLPGLVAHQEVIFGSQGEGLTLRHDSYDRASFMTGVNLAIKEVVKRSELVYGLEHLL.

NAD(+) is bound by residues 9–14 (GFKGKM), 89–91 (GTT), and 115–118 (APNF). Residue His-145 is the Proton donor/acceptor of the active site. A (S)-2,3,4,5-tetrahydrodipicolinate-binding site is contributed by His-146. Lys-149 acts as the Proton donor in catalysis. 155-156 (GT) contributes to the (S)-2,3,4,5-tetrahydrodipicolinate binding site.

The protein belongs to the DapB family.

The protein resides in the cytoplasm. The catalysed reaction is (S)-2,3,4,5-tetrahydrodipicolinate + NAD(+) + H2O = (2S,4S)-4-hydroxy-2,3,4,5-tetrahydrodipicolinate + NADH + H(+). It catalyses the reaction (S)-2,3,4,5-tetrahydrodipicolinate + NADP(+) + H2O = (2S,4S)-4-hydroxy-2,3,4,5-tetrahydrodipicolinate + NADPH + H(+). Its pathway is amino-acid biosynthesis; L-lysine biosynthesis via DAP pathway; (S)-tetrahydrodipicolinate from L-aspartate: step 4/4. Functionally, catalyzes the conversion of 4-hydroxy-tetrahydrodipicolinate (HTPA) to tetrahydrodipicolinate. The chain is 4-hydroxy-tetrahydrodipicolinate reductase from Streptococcus gordonii (strain Challis / ATCC 35105 / BCRC 15272 / CH1 / DL1 / V288).